Here is a 483-residue protein sequence, read N- to C-terminus: Altronate oxidoreductase (483 aa).

NAD(+) is bound at residue 18–29 (IIQFGEGNFLRA).

This sequence belongs to the mannitol dehydrogenase family. UxaB subfamily.

It carries out the reaction D-altronate + NAD(+) = keto-D-tagaturonate + NADH + H(+). Its pathway is carbohydrate metabolism; pentose and glucuronate interconversion. The protein is Altronate oxidoreductase of Yersinia pestis.